The chain runs to 626 residues: Basic helix-loop-helix ARNT-like protein 1 (626 aa).

The disordered stretch occupies residues 1–58 (MADQRMDISSTISDFMSPGPTDLLSGSLSTSGVDCNRKRKGSATDYQESMDTDKDDPH). Residue S17 is modified to Phosphoserine; by GSK3-beta. The span at 17–32 (SPGPTDLLSGSLSTSG) shows a compositional bias: low complexity. T21 bears the Phosphothreonine; by GSK3-beta mark. Positions 36 to 41 (NRKRKG) match the Nuclear localization signal motif. A bHLH domain is found at 72–125 (NAREAHSQIEKRRRDKMNSFIDELASLVPTCNAMSRKLDKLTVLRMAVQHMKTL). Position 78 is a phosphoserine (S78). The residue at position 90 (S90) is a Phosphoserine; by CK2. Positions 142–152 (LSDDELKHLIL) match the Nuclear export signal 1 motif. One can recognise a PAS 1 domain in the interval 143 to 215 (SDDELKHLIL…EQLSSSDTAP (73 aa)). K252 is covalently cross-linked (Glycyl lysine isopeptide (Lys-Gly) (interchain with G-Cter in SUMO2 and SUMO3)). K259 participates in a covalent cross-link: Glycyl lysine isopeptide (Lys-Gly) (interchain with G-Cter in SUMO); alternate. K259 participates in a covalent cross-link: Glycyl lysine isopeptide (Lys-Gly) (interchain with G-Cter in SUMO2); alternate. Positions 326 to 396 (PQPVNGEIRV…ECHRQVLQTR (71 aa)) constitute a PAS 2 domain. The short motif at 361–369 (LAYLPQELL) is the Nuclear export signal 2 element. Residues 401 to 444 (TNCYKFKIKDGSFITLRSRWFSFMNPWTKEVEYIVSTNTVVLAN) form the PAC domain. 2 disordered regions span residues 459 to 492 (SPHSMDSMLPSGEGGPKRTHPTVPGIPGGTRAGA) and 511 to 595 (GSSP…SPSN). Residues 508 to 588 (RIRGSSPSSC…IGIDMIDNDQ (81 aa)) are interaction with CIART. The span at 511-521 (GSSPSSCGSSP) shows a compositional bias: low complexity. Position 538 is an N6-acetyllysine (K538).

As to quaternary structure, component of the circadian clock oscillator which includes the CRY1/2 proteins, CLOCK or NPAS2, BMAL1 or BMAL2, CSNK1D and/or CSNK1E, TIMELESS and the PER1/2/3 proteins. Forms a heterodimer with CLOCK. The CLOCK-BMAL1 heterodimer is required for E-box-dependent transactivation, for CLOCK nuclear translocation and degradation, and, for phosphorylation of both CLOCK and BMAL1. Part of a nuclear complex which also includes RACK1 and PRKCA; RACK1 and PRKCA are recruited to the complex in a circadian manner. Interacts with NPAS2. Interacts with EZH2. Interacts with SUMO3. Interacts with SIRT1. Interacts with AHR. Interacts with ID1, ID2 and ID3. Interacts with DDX4. Interacts with OGT. Interacts with EED and SUZ12. Interacts with MTA1. Interacts with CIART. Interacts with HSP90. Interacts with KAT2B and EP300. Interacts with BHLHE40/DEC1 and BHLHE41/DEC2. Interacts with RELB and the interaction is enhanced in the presence of CLOCK. Interacts with PER1, PER2, CRY1 and CRY2 and this interaction requires a translocation to the nucleus. Interaction of the CLOCK-BMAL1 heterodimer with PER or CRY inhibits transcription activation. Interaction of the CLOCK-BMAL1 with CRY1 is independent of DNA but with PER2 is off DNA. The CLOCK-BMAL1 heterodimer interacts with GSK3B. Interacts with KDM5A. Interacts with KMT2A; in a circadian manner. Interacts with UBE3A. Interacts with PRKCG. Interacts with MAGEL2. Interacts with NCOA2. Interacts with THRAP3. The CLOCK-BMAL1 heterodimer interacts with PASD1. Interacts with PASD1. Interacts with USP9X. Interacts with PIWIL2 (via PIWI domain). Interacts with HDAC3. Interacts with HNF4A. Ubiquitinated, leading to its proteasomal degradation. Deubiquitinated by USP9X. Post-translationally, O-glycosylated; contains O-GlcNAc. O-glycosylation by OGT prevents protein degradation by inhibiting ubiquitination. It also stabilizes the CLOCK-BMAL1 heterodimer thereby increasing CLOCK-BMAL1-mediated transcription of genes in the negative loop of the circadian clock such as PER1/2/3 and CRY1/2. In terms of processing, acetylated on Lys-538 by CLOCK during the repression phase of the circadian cycle. Acetylation facilitates recruitment of CRY1 protein and initiates the repression phase of the circadian cycle. Acetylated at Lys-538 by KAT5 during the activation phase of the cycle, leading to recruitment of the positive transcription elongation factor b (P-TEFb) and BRD4, followed by productive elongation of circadian transcripts. Deacetylated by SIRT1, which may result in decreased protein stability. Phosphorylated upon dimerization with CLOCK. Phosphorylation enhances the transcriptional activity, alters the subcellular localization and decreases the stability of the CLOCK-BMAL1 heterodimer by promoting its degradation. Phosphorylation shows circadian variations in the liver with a peak between CT10 to CT14. Phosphorylation at Ser-90 by CK2 is essential for its nuclear localization, its interaction with CLOCK and controls CLOCK nuclear entry. Dephosphorylation at Ser-78 is important for dimerization with CLOCK and transcriptional activity. Post-translationally, sumoylated on Lys-259 upon dimerization with CLOCK. Predominantly conjugated to poly-SUMO2/3 rather than SUMO1 and the level of these conjugates undergo rhythmic variation, peaking at CT9-CT12. Sumoylation localizes it exclusively to the PML body and promotes its ubiquitination in the PML body, ubiquitin-dependent proteasomal degradation and the transcriptional activity of the CLOCK-BMAL1 heterodimer. In terms of processing, undergoes lysosome-mediated degradation in a time-dependent manner in the liver.

It is found in the nucleus. It localises to the cytoplasm. The protein resides in the PML body. Transcriptional activator which forms a core component of the circadian clock. The circadian clock, an internal time-keeping system, regulates various physiological processes through the generation of approximately 24 hour circadian rhythms in gene expression, which are translated into rhythms in metabolism and behavior. It is derived from the Latin roots 'circa' (about) and 'diem' (day) and acts as an important regulator of a wide array of physiological functions including metabolism, sleep, body temperature, blood pressure, endocrine, immune, cardiovascular, and renal function. Consists of two major components: the central clock, residing in the suprachiasmatic nucleus (SCN) of the brain, and the peripheral clocks that are present in nearly every tissue and organ system. Both the central and peripheral clocks can be reset by environmental cues, also known as Zeitgebers (German for 'timegivers'). The predominant Zeitgeber for the central clock is light, which is sensed by retina and signals directly to the SCN. The central clock entrains the peripheral clocks through neuronal and hormonal signals, body temperature and feeding-related cues, aligning all clocks with the external light/dark cycle. Circadian rhythms allow an organism to achieve temporal homeostasis with its environment at the molecular level by regulating gene expression to create a peak of protein expression once every 24 hours to control when a particular physiological process is most active with respect to the solar day. Transcription and translation of core clock components (CLOCK, NPAS2, BMAL1, BMAL2, PER1, PER2, PER3, CRY1 and CRY2) plays a critical role in rhythm generation, whereas delays imposed by post-translational modifications (PTMs) are important for determining the period (tau) of the rhythms (tau refers to the period of a rhythm and is the length, in time, of one complete cycle). A diurnal rhythm is synchronized with the day/night cycle, while the ultradian and infradian rhythms have a period shorter and longer than 24 hours, respectively. Disruptions in the circadian rhythms contribute to the pathology of cardiovascular diseases, cancer, metabolic syndromes and aging. A transcription/translation feedback loop (TTFL) forms the core of the molecular circadian clock mechanism. Transcription factors, CLOCK or NPAS2 and BMAL1 or BMAL2, form the positive limb of the feedback loop, act in the form of a heterodimer and activate the transcription of core clock genes and clock-controlled genes (involved in key metabolic processes), harboring E-box elements (5'-CACGTG-3') within their promoters. The core clock genes: PER1/2/3 and CRY1/2 which are transcriptional repressors form the negative limb of the feedback loop and interact with the CLOCK|NPAS2-BMAL1|BMAL2 heterodimer inhibiting its activity and thereby negatively regulating their own expression. This heterodimer also activates nuclear receptors NR1D1/2 and RORA/B/G, which form a second feedback loop and which activate and repress BMAL1 transcription, respectively. BMAL1 positively regulates myogenesis and negatively regulates adipogenesis via the transcriptional control of the genes of the canonical Wnt signaling pathway. Plays a role in normal pancreatic beta-cell function; regulates glucose-stimulated insulin secretion via the regulation of antioxidant genes NFE2L2/NRF2 and its targets SESN2, PRDX3, CCLC and CCLM. Negatively regulates the mTORC1 signaling pathway; regulates the expression of MTOR and DEPTOR. Controls diurnal oscillations of Ly6C inflammatory monocytes; rhythmic recruitment of the PRC2 complex imparts diurnal variation to chemokine expression that is necessary to sustain Ly6C monocyte rhythms. Regulates the expression of HSD3B2, STAR, PTGS2, CYP11A1, CYP19A1 and LHCGR in the ovary and also the genes involved in hair growth. Plays an important role in adult hippocampal neurogenesis by regulating the timely entry of neural stem/progenitor cells (NSPCs) into the cell cycle and the number of cell divisions that take place prior to cell-cycle exit. Regulates the circadian expression of CIART and KLF11. The CLOCK-BMAL1 heterodimer regulates the circadian expression of SERPINE1/PAI1, VWF, B3, CCRN4L/NOC, NAMPT, DBP, MYOD1, PPARGC1A, PPARGC1B, SIRT1, GYS2, F7, NGFR, GNRHR, BHLHE40/DEC1, ATF4, MTA1, KLF10 and also genes implicated in glucose and lipid metabolism. Promotes rhythmic chromatin opening, regulating the DNA accessibility of other transcription factors. May play a role in spermatogenesis; contributes to the chromatoid body assembly and physiology. The NPAS2-BMAL1 heterodimer positively regulates the expression of MAOA, F7 and LDHA and modulates the circadian rhythm of daytime contrast sensitivity by regulating the rhythmic expression of adenylate cyclase type 1 (ADCY1) in the retina. The preferred binding motif for the CLOCK-BMAL1 heterodimer is 5'-CACGTGA-3', which contains a flanking adenine nucleotide at the 3-prime end of the canonical 6-nucleotide E-box sequence. CLOCK specifically binds to the half-site 5'-CAC-3', while BMAL1 binds to the half-site 5'-GTGA-3'. The CLOCK-BMAL1 heterodimer also recognizes the non-canonical E-box motifs 5'-AACGTGA-3' and 5'-CATGTGA-3'. Essential for the rhythmic interaction of CLOCK with ASS1 and plays a critical role in positively regulating CLOCK-mediated acetylation of ASS1. Plays a role in protecting against lethal sepsis by limiting the expression of immune checkpoint protein CD274 in macrophages in a PKM2-dependent manner. Regulates the diurnal rhythms of skeletal muscle metabolism via transcriptional activation of genes promoting triglyceride synthesis (DGAT2) and metabolic efficiency (COQ10B). In Rattus norvegicus (Rat), this protein is Basic helix-loop-helix ARNT-like protein 1.